The following is a 96-amino-acid chain: ATP-dependent Clp protease adapter protein ClpS (96 aa).

This sequence belongs to the ClpS family. Binds to the N-terminal domain of the chaperone ClpA.

Its function is as follows. Involved in the modulation of the specificity of the ClpAP-mediated ATP-dependent protein degradation. The chain is ATP-dependent Clp protease adapter protein ClpS from Campylobacter jejuni subsp. doylei (strain ATCC BAA-1458 / RM4099 / 269.97).